The following is a 154-amino-acid chain: Keratin-associated protein 9-9 (154 aa).

Tandem repeats lie at residues 8 to 12 (CCQPT), 13 to 17 (CCRTT), 18 to 22 (CCRTT), 37 to 41 (CCQPS), 42 to 46 (CCVSS), 51 to 55 (CCRPA), 56 to 60 (CCQNT), 61 to 65 (CCRTT), 66 to 70 (CCQPT), 75 to 79 (CCGQT), 124 to 128 (CCRPA), 129 to 133 (CCETT), 134 to 137 (CCRT), and 148 to 152 (CCQPS). The interval 8 to 152 (CCQPTCCRTT…TCVSSCCQPS (145 aa)) is 14 X 5 AA repeats of C-C-[RQVGE]-[SPSTNQ]-[TASL].

It belongs to the KRTAP type 9 family. As to quaternary structure, interacts with hair keratins.

Functionally, in the hair cortex, hair keratin intermediate filaments are embedded in an interfilamentous matrix, consisting of hair keratin-associated proteins (KRTAP), which are essential for the formation of a rigid and resistant hair shaft through their extensive disulfide bond cross-linking with abundant cysteine residues of hair keratins. The matrix proteins include the high-sulfur and high-glycine-tyrosine keratins. This is Keratin-associated protein 9-9 (KRTAP9-9) from Homo sapiens (Human).